The primary structure comprises 32 residues: Variegin (32 aa).

Residues serine 1–serine 32 form a disordered region. Positions glutamate 8–threonine 14 are contains the active site. Threonine 14 carries O-linked (Hex) threonine glycosylation. Residues alanine 22–serine 32 are compositionally biased toward acidic residues.

In terms of assembly, interacts with human F2 (thrombin); the interaction results in thrombin inhibition.

The protein localises to the secreted. Thrombin inhibitor. Does not inhibit other serine proteases. This is Variegin from Amblyomma variegatum (Tropical bont tick).